Consider the following 365-residue polypeptide: MSLEEKKKTESKEKDKALSLVLGQIERNFGRGSIMRLGDASRMKVETISTGALTLDLALGGGYPKGRVVEVYGPESSGKTTLTLHAIAEVQKNGGVAAFVDAEHALDPVYAASLGVDVENLLVSQPDTGEMALEIVDQLIRSSAVDLVVVDSVAALTPRAEIEGEMGDHVIGSQARLMSQAMRKITGNIGKSGCTVIFLNQLRLKIGVTYGNPETTTGGNALKFYASVRLDIRRIQTLKRGTEEYGIRAKVKVAKNKVAPPFRIAEFDILFGKGISTTGCLLDLAEETNIIIRRGAWYSYEGENIGQGRDNTIIWLDQNLEIRNKVESMVKEKLTEGTEVSSNSMKALNSNPANTIAVNDIKTVA.

Residue 73–80 (GPESSGKT) coordinates ATP.

Belongs to the RecA family.

Its subcellular location is the cytoplasm. Functionally, can catalyze the hydrolysis of ATP in the presence of single-stranded DNA, the ATP-dependent uptake of single-stranded DNA by duplex DNA, and the ATP-dependent hybridization of homologous single-stranded DNAs. It interacts with LexA causing its activation and leading to its autocatalytic cleavage. The sequence is that of Protein RecA from Prochlorococcus marinus (strain AS9601).